Here is a 238-residue protein sequence, read N- to C-terminus: MRIDNRELDQLRTVTFERNYTKHAEGSVLVCFGDTKVLCTASVEAGVPRWLKGKGQGWVTAEYGMLPRATNTRNQREAARGKQSGRTQEIQRLIGRSLRAMVDLTKLGENTIYLDCDVLQADGGTRTASITGAAIALIDALEVLQQKKKLKADPLIGLVAAVSVGVKNGEVLLDLNYEEDSSCDTDLNVVMTQKGEFIEIQGTAEEKPFTRAEADKMLAMAEKGIADLVKLQQTALGW.

Residues R86 and G124–R126 contribute to the phosphate site.

The protein belongs to the RNase PH family. In terms of assembly, homohexameric ring arranged as a trimer of dimers.

It catalyses the reaction tRNA(n+1) + phosphate = tRNA(n) + a ribonucleoside 5'-diphosphate. In terms of biological role, phosphorolytic 3'-5' exoribonuclease that plays an important role in tRNA 3'-end maturation. Removes nucleotide residues following the 3'-CCA terminus of tRNAs; can also add nucleotides to the ends of RNA molecules by using nucleoside diphosphates as substrates, but this may not be physiologically important. Probably plays a role in initiation of 16S rRNA degradation (leading to ribosome degradation) during starvation. The chain is Ribonuclease PH from Psychrobacter sp. (strain PRwf-1).